The chain runs to 298 residues: Urease accessory protein UreD (298 aa).

This sequence belongs to the UreD family. As to quaternary structure, ureD, UreF and UreG form a complex that acts as a GTP-hydrolysis-dependent molecular chaperone, activating the urease apoprotein by helping to assemble the nickel containing metallocenter of UreC. The UreE protein probably delivers the nickel.

The protein localises to the cytoplasm. Required for maturation of urease via the functional incorporation of the urease nickel metallocenter. The chain is Urease accessory protein UreD from Marinobacter nauticus (strain ATCC 700491 / DSM 11845 / VT8) (Marinobacter aquaeolei).